We begin with the raw amino-acid sequence, 77 residues long: Small integral membrane protein 7 (77 aa).

A signal peptide spans 1-17; that stretch reads MIGDLLIFGTLLMNAGA. Residues 18 to 55 are Extracellular-facing; sequence VLNFKLKKRETQSQGFGDDSGSSSTGENIREFLLSLRY. A helical membrane pass occupies residues 56 to 76; the sequence is FRIFIALWNIFMMFCMIVLFG. Residue S77 is a topological domain, cytoplasmic.

The protein belongs to the SMIM7 family.

The protein resides in the membrane. The polypeptide is Small integral membrane protein 7 (smim7) (Danio rerio (Zebrafish)).